The sequence spans 177 residues: ATP-dependent protease subunit HslV (177 aa).

Thr4 is an active-site residue. 3 residues coordinate Na(+): Ser159, Cys162, and Thr165.

This sequence belongs to the peptidase T1B family. HslV subfamily. In terms of assembly, a double ring-shaped homohexamer of HslV is capped on each side by a ring-shaped HslU homohexamer. The assembly of the HslU/HslV complex is dependent on binding of ATP.

The protein localises to the cytoplasm. It catalyses the reaction ATP-dependent cleavage of peptide bonds with broad specificity.. With respect to regulation, allosterically activated by HslU binding. Protease subunit of a proteasome-like degradation complex believed to be a general protein degrading machinery. This chain is ATP-dependent protease subunit HslV, found in Mesorhizobium japonicum (strain LMG 29417 / CECT 9101 / MAFF 303099) (Mesorhizobium loti (strain MAFF 303099)).